A 276-amino-acid chain; its full sequence is Urease accessory protein UreD (276 aa).

This sequence belongs to the UreD family. As to quaternary structure, ureD, UreF and UreG form a complex that acts as a GTP-hydrolysis-dependent molecular chaperone, activating the urease apoprotein by helping to assemble the nickel containing metallocenter of UreC. The UreE protein probably delivers the nickel.

Its subcellular location is the cytoplasm. Required for maturation of urease via the functional incorporation of the urease nickel metallocenter. This Albidiferax ferrireducens (strain ATCC BAA-621 / DSM 15236 / T118) (Rhodoferax ferrireducens) protein is Urease accessory protein UreD.